Here is a 309-residue protein sequence, read N- to C-terminus: Probable pyridoxal 5'-phosphate synthase subunit PDX1 (309 aa).

Residue Asp-40 participates in D-ribose 5-phosphate binding. Lys-97 functions as the Schiff-base intermediate with D-ribose 5-phosphate in the catalytic mechanism. A D-ribose 5-phosphate-binding site is contributed by Gly-169. D-glyceraldehyde 3-phosphate is bound at residue Arg-181. D-ribose 5-phosphate is bound by residues Gly-230 and 251–252 (GS).

This sequence belongs to the PdxS/SNZ family.

The enzyme catalyses aldehydo-D-ribose 5-phosphate + D-glyceraldehyde 3-phosphate + L-glutamine = pyridoxal 5'-phosphate + L-glutamate + phosphate + 3 H2O + H(+). The protein operates within cofactor biosynthesis; pyridoxal 5'-phosphate biosynthesis. Catalyzes the formation of pyridoxal 5'-phosphate from ribose 5-phosphate (RBP), glyceraldehyde 3-phosphate (G3P) and ammonia. The ammonia is provided by PDX2. Can also use ribulose 5-phosphate and dihydroxyacetone phosphate as substrates, resulting from enzyme-catalyzed isomerization of RBP and G3P, respectively. Also plays an indirect role in resistance to singlet oxygen-generating photosensitizers. The polypeptide is Probable pyridoxal 5'-phosphate synthase subunit PDX1 (PDX1) (Hevea brasiliensis (Para rubber tree)).